The following is a 676-amino-acid chain: Transcription factor RLM1 (676 aa).

An MADS-box domain is found at 3 to 57 (RRKIEIQRISDDRNRAVTFIKRKAGLFKKAHELSVLCQVDIAVIILGSNNTFYEF). Residues 58–87 (SSVDTNDLIYHYQNDKNLLHEVKDPSDYGD) constitute a DNA-binding region (mef2-type). A compositionally biased stretch (polar residues) spans 103–120 (SSMSNKPSKSNVKGMNQS). The tract at residues 103 to 156 (SSMSNKPSKSNVKGMNQSENDDDENNDEDDDDHGNFERNSNMHSNKKASDKNIP) is disordered. Position 120 is a phosphoserine (serine 120). Positions 121 to 134 (ENDDDENNDEDDDD) are enriched in acidic residues. Serine 164 bears the Phosphoserine mark. The segment covering 173–183 (DGSEQNKRHPE) has biased composition (basic and acidic residues). Disordered stretches follow at residues 173 to 192 (DGSE…LQHL), 202 to 318 (ISRT…RRKL), 330 to 424 (NNNF…PFGS), 472 to 514 (KKQS…VHDL), and 532 to 631 (MGPN…NSST). Positions 260–276 (ISPNKFSKPFTNASSRT) are enriched in polar residues. A compositionally biased stretch (low complexity) spans 284-295 (NNSGSNNNDNSN). A compositionally biased stretch (polar residues) spans 296-312 (YTQSPSNSLEDSIQQTV). Composition is skewed to low complexity over residues 334 to 359 (SSNS…MGSS), 368 to 381 (SRSS…ASAS), and 399 to 417 (PNAN…NNNN). Phosphoserine is present on residues serine 374 and serine 377. Residues 472-506 (KKQSQTVPLTTTLTGRPPSTFSGPETSNGPPTGSL) show a composition bias toward polar residues. A compositionally biased stretch (low complexity) spans 539-604 (PGNTNNPGTF…NSNNSYYSNN (66 aa)). The segment covering 621–631 (GDSNNQSNSST) has biased composition (polar residues).

Belongs to the MEF2 family. In terms of assembly, can heterodimerize with SPM1. Interacts with KDX1 and SLT2. In terms of processing, phosphorylated by SLT2.

The protein localises to the nucleus. In terms of biological role, may function as a transcription factor downstream of MPK1 that is subject to activation by the MPK1 mitogen-activated protein kinase pathway. Binds to the DNA sequence 5'-CTA[TA](4)TAG-3'. At least some RML1 target genes are involved in cell wall biosynthesis. This Saccharomyces cerevisiae (strain ATCC 204508 / S288c) (Baker's yeast) protein is Transcription factor RLM1 (RLM1).